Reading from the N-terminus, the 326-residue chain is Peroxidase 43 (326 aa).

The N-terminal stretch at 1 to 24 (MVWANAKMRLALSLVTVFFGISLA) is a signal peptide. Intrachain disulfides connect cysteine 35–cysteine 112, cysteine 68–cysteine 73, cysteine 118–cysteine 322, and cysteine 196–cysteine 228. The active-site Proton acceptor is histidine 66. Positions 67, 70, 72, 74, and 76 each coordinate Ca(2+). Residue asparagine 151 is glycosylated (N-linked (GlcNAc...) asparagine). Position 159 (proline 159) interacts with substrate. Histidine 189 contacts heme b. Residue threonine 190 participates in Ca(2+) binding. 3 residues coordinate Ca(2+): aspartate 241, serine 244, and aspartate 249.

The protein belongs to the peroxidase family. Classical plant (class III) peroxidase subfamily. It depends on heme b as a cofactor. The cofactor is Ca(2+).

It is found in the secreted. The catalysed reaction is 2 a phenolic donor + H2O2 = 2 a phenolic radical donor + 2 H2O. Its function is as follows. Removal of H(2)O(2), oxidation of toxic reductants, biosynthesis and degradation of lignin, suberization, auxin catabolism, response to environmental stresses such as wounding, pathogen attack and oxidative stress. These functions might be dependent on each isozyme/isoform in each plant tissue. This chain is Peroxidase 43 (PER43), found in Arabidopsis thaliana (Mouse-ear cress).